Consider the following 87-residue polypeptide: Serine protease inhibitor Kazal-type 12 (87 aa).

The signal sequence occupies residues methionine 1–alanine 22. In terms of domain architecture, Kazal-like spans glycine 26–cysteine 87. Disulfide bonds link cysteine 32–cysteine 68, cysteine 46–cysteine 65, and cysteine 54–cysteine 87.

As to expression, expressed in epydiymis, in the caput.

It is found in the secreted. Inhibits trypsin. In Mus musculus (Mouse), this protein is Serine protease inhibitor Kazal-type 12 (Spink12).